Consider the following 1387-residue polypeptide: Dicer-like protein 2-1 (1387 aa).

A Helicase ATP-binding domain is found at 26–205 (MFEASLKENI…LLKIESNLDA (180 aa)). Position 39 to 46 (39 to 46 (MGTGSGKT)) interacts with ATP. Residues 146–149 (DEAH) carry the DEAH box motif. One can recognise a Helicase C-terminal domain in the interval 370 to 535 (KFRSLLEFLD…AYEDDERRLR (166 aa)). Positions 565–659 (AVAHLNHFCA…LPFKRNLELK (95 aa)) constitute a Dicer dsRNA-binding fold domain. 2 RNase III domains span residues 915–1055 (ATRL…IDGG) and 1094–1277 (DDHL…IDSH). Mg(2+) is bound by residues Glu1133, Asp1263, and Glu1266.

The protein belongs to the helicase family. Dicer subfamily. Requires Mg(2+) as cofactor. Mn(2+) serves as cofactor.

Its function is as follows. Dicer-like endonuclease involved in cleaving double-stranded RNA in the RNA interference (RNAi) pathway. Produces 21 to 25 bp dsRNAs (siRNAs) which target the selective destruction of homologous RNAs leading to sequence-specific suppression of gene expression, called post-transcriptional gene silencing (PTGS). Part of a broad host defense response against viral infection and transposons. This is Dicer-like protein 2-1 (dcl2-1) from Aspergillus niger (strain ATCC MYA-4892 / CBS 513.88 / FGSC A1513).